Consider the following 283-residue polypeptide: Pantothenate synthetase (283 aa).

30-37 lines the ATP pocket; sequence MGALHEGH. H37 acts as the Proton donor in catalysis. (R)-pantoate is bound at residue Q61. Q61 is a binding site for beta-alanine. Residue 149-152 coordinates ATP; that stretch reads GEKD. Q155 serves as a coordination point for (R)-pantoate. Residues L178 and 186 to 189 each bind ATP; that span reads RSSR.

Belongs to the pantothenate synthetase family. As to quaternary structure, homodimer.

It localises to the cytoplasm. It carries out the reaction (R)-pantoate + beta-alanine + ATP = (R)-pantothenate + AMP + diphosphate + H(+). It participates in cofactor biosynthesis; (R)-pantothenate biosynthesis; (R)-pantothenate from (R)-pantoate and beta-alanine: step 1/1. Its function is as follows. Catalyzes the condensation of pantoate with beta-alanine in an ATP-dependent reaction via a pantoyl-adenylate intermediate. This chain is Pantothenate synthetase, found in Christiangramia forsetii (strain DSM 17595 / CGMCC 1.15422 / KT0803) (Gramella forsetii).